Reading from the N-terminus, the 132-residue chain is Small ribosomal subunit protein uS8 (132 aa).

The protein belongs to the universal ribosomal protein uS8 family. In terms of assembly, part of the 30S ribosomal subunit. Contacts proteins S5 and S12.

Its function is as follows. One of the primary rRNA binding proteins, it binds directly to 16S rRNA central domain where it helps coordinate assembly of the platform of the 30S subunit. The polypeptide is Small ribosomal subunit protein uS8 (Bartonella tribocorum (strain CIP 105476 / IBS 506)).